A 414-amino-acid chain; its full sequence is Serine hydroxymethyltransferase (414 aa).

Residues leucine 121 and 125-127 (GHL) contribute to the (6S)-5,6,7,8-tetrahydrofolate site. Residue lysine 229 is modified to N6-(pyridoxal phosphate)lysine.

The protein belongs to the SHMT family. Homodimer. The cofactor is pyridoxal 5'-phosphate.

The protein resides in the cytoplasm. It carries out the reaction (6R)-5,10-methylene-5,6,7,8-tetrahydrofolate + glycine + H2O = (6S)-5,6,7,8-tetrahydrofolate + L-serine. It functions in the pathway one-carbon metabolism; tetrahydrofolate interconversion. It participates in amino-acid biosynthesis; glycine biosynthesis; glycine from L-serine: step 1/1. Functionally, catalyzes the reversible interconversion of serine and glycine with tetrahydrofolate (THF) serving as the one-carbon carrier. This reaction serves as the major source of one-carbon groups required for the biosynthesis of purines, thymidylate, methionine, and other important biomolecules. Also exhibits THF-independent aldolase activity toward beta-hydroxyamino acids, producing glycine and aldehydes, via a retro-aldol mechanism. The polypeptide is Serine hydroxymethyltransferase (Janthinobacterium sp. (strain Marseille) (Minibacterium massiliensis)).